Reading from the N-terminus, the 406-residue chain is D-alanyl-D-alanine carboxypeptidase (406 aa).

An N-terminal signal peptide occupies residues 1–31 (MVSGTVGRGTALGAVLLALLAVPAQAGTAAA). S93 (acyl-ester intermediate) is an active-site residue. Substrate-binding positions include 151-154 (FAQT), 190-192 (YSN), R316, 330-332 (TGT), and 357-358 (SN). Residues 381-406 (AKLRSATSSATTVERHEDIAPGIARD) constitute a propeptide that is removed on maturation. The tract at residues 387 to 406 (TSSATTVERHEDIAPGIARD) is disordered. Positions 393 to 406 (VERHEDIAPGIARD) are enriched in basic and acidic residues.

This sequence belongs to the peptidase S12 family.

It is found in the secreted. The catalysed reaction is Preferential cleavage: (Ac)2-L-Lys-D-Ala-|-D-Ala. Also transpeptidation of peptidyl-alanyl moieties that are N-acyl substituents of D-alanine.. The protein operates within cell wall biogenesis; peptidoglycan biosynthesis. In terms of biological role, catalyzes distinct carboxypeptidation and transpeptidation reactions during the last stages of wall peptidoglycan synthesis. Mistaking a beta-lactam antibiotic molecule for a normal substrate (i.e. a D-alanyl-D-alanine-terminated peptide), it becomes immobilized in the form of a long-lived, serine-ester-linked acyl enzyme and thus behave as penicillin-binding protein (PBP). The polypeptide is D-alanyl-D-alanine carboxypeptidase (Streptomyces sp. (strain R61)).